The sequence spans 418 residues: STE20-related kinase adapter protein beta (418 aa).

Residues 58–369 (YELQVEIGRG…ASSLLSHVFF (312 aa)) form the Protein kinase domain. Residues 64 to 72 (IGRGFDNLT) and Lys-89 each bind ATP.

This sequence belongs to the protein kinase superfamily. STE Ser/Thr protein kinase family. STE20 subfamily. As to quaternary structure, component of a trimeric complex composed of STK11/LKB1, STRAD (STRADA or STRADB) and CAB39/MO25 (CAB39/MO25alpha or CAB39L/MO25beta): the complex tethers STK11/LKB1 in the cytoplasm and stimulates its catalytic activity. Interacts with BIRC4/XIAP. These two proteins are likely to coexist in a complex with TAK1, TRAF6, TAB1 and TAB2.

It is found in the nucleus. It localises to the cytoplasm. In terms of biological role, pseudokinase which, in complex with CAB39/MO25 (CAB39/MO25alpha or CAB39L/MO25beta), binds to and activates STK11/LKB1. Adopts a closed conformation typical of active protein kinases and binds STK11/LKB1 as a pseudosubstrate, promoting conformational change of STK11/LKB1 in an active conformation. The chain is STE20-related kinase adapter protein beta (Stradb) from Mus musculus (Mouse).